A 628-amino-acid polypeptide reads, in one-letter code: EIN3-binding F-box protein 1 (628 aa).

Residues 61 to 109 (PVSIDVLPDECLFEIFRRLSGPQERSACAFVSKQWLTLVSSIRQKEIDV) enclose the F-box domain.

In terms of assembly, part of a SCF (SKP1-cullin-F-box) protein ligase complex. Interacts with CUL1, SKP1A/ASK1, SKP1B/ASK2, ASK11, ASK12, ASK13, ASK18, EIN3, and EIL1. As to expression, ubiquitous.

The protein localises to the nucleus. It functions in the pathway protein modification; protein ubiquitination. Component of SCF(EBF1) E3 ubiquitin ligase complexes, which may mediate the ubiquitination and subsequent proteasomal degradation of target proteins (probably including EIN3 and EIL1). Regulator of the ethylene signaling cascade by modulating the stability of EIN3 and EIL1 proteins. Confers insensitivity to ethylene. The sequence is that of EIN3-binding F-box protein 1 (EBF1) from Arabidopsis thaliana (Mouse-ear cress).